Here is a 1172-residue protein sequence, read N- to C-terminus: MPDQDKKVKTTEKSTDKQQEITIRDYSDLKRLRCLLNVQSSKQQLPAINFDSAQNSMTKSEPAIRAGGHRARGQWHESTEAVELENFSINYKNERNFSKHPQRKLFQEIFTALVKNRLISREWVNRAPSIHFLRVLICLRLLMRDPCYQEILHSLGGIENLAQYMEIVANEYLGYGEEQHTVDKLVNMTYIFQKLAAVKDQREWVTTSGAHKTLVNLLGARDTNVLLGSLLALASLAESQECREKISELNIVENLLMILHEYDLLSKRLTAELLRLLCAEPQVKEQVKLYEGIPVLLSLLHSDHLKLLWSIVWILVQVCEDPETSVEIRIWGGIKQLLHILQGDRNFVSDHSSIGSLSSANAAGRIQQLHLSEDLSPREIQENTFSLQAACCAALTELVLNDTNAHQVVQENGVYTIAKLILPNKQKNAAKSNLLQCYAFRALRFLFSMERNRPLFKRLFPTDLFEIFIDIGHYVRDISAYEELVSKLNLLVEDELKQIAENIESINQNKAPLKYIGNYAILDHLGSGAFGCVYKVRKHSGQNLLAMKEVNLHNPAFGKDKKDRDSSVRNIVSELTIIKEQLYHPNIVRYYKTFLENDRLYIVMELIEGAPLGEHFSSLKEKHHHFTEERLWKIFIQLCLALRYLHKEKRIVHRDLTPNNIMLGDKDKVTVTDFGLAKQKQENSKLTSVVGTILYSCPEVLKSEPYGEKADVWAVGCILYQMATLSPPFYSTNMLSLATKIVEAVYEPVPEGIYSEKVTDTISRCLTPDAEARPDIVEVSSMISDVMMKYLDNLSTSQLSLEKKLERERRRTQRYFMEANRNTVTCHHELAVLSHETFEKASLSSSSSGAASLKSELSESADLPPEGFQASYGKDEDRACDEILSDDNFNLENAEKDTYSEVDDELDISDNSSSSSSSPLKESTFNILKRSFSASGGERQSQTRDFTGGTGSRPRPALLPLDLLLKVPPHMLRAHIKEIEAELVTGWQSHSLPAVILRNLKDHGPQMGTFLWQASAGIAVSQRKVRQISDPIQQILIQLHKIIYITQLPPALHHNLKRRVIERFKKSLFSQQSNPCNLKSEIKKLSQGSPEPIEPNFFTADYHLLHRSSGGNSLSPNDPTGLPTSIELEEGITYEQMQTVIEEVLEESGYYNFTSNRYHSYPWGTKNHPTKR.

Residues 209 to 251 (GAHKTLVNLLGARDTNVLLGSLLALASLAESQECREKISELNI) form an ARM repeat. A coiled-coil region spans residues 481–514 (YEELVSKLNLLVEDELKQIAENIESINQNKAPLK). The Protein kinase domain occupies 519 to 712 (YAILDHLGSG…SEPYGEKADV (194 aa)). Residues 525–533 (LGSGAFGCV) and lysine 548 each bind ATP. Aspartate 655 acts as the Proton acceptor in catalysis. Disordered regions lie at residues 855–875 (SELS…YGKD) and 898–954 (TYSE…GSRP). Residues 919-945 (PLKESTFNILKRSFSASGGERQSQTRD) show a composition bias toward polar residues.

It belongs to the protein kinase superfamily. NEK Ser/Thr protein kinase family. NIMA subfamily. In terms of assembly, interacts with RAF1 and MAP2K1; the interaction is direct with RAF1 and required for ERK1/2-signaling pathway activation in response to UV irradiation. The cofactor is Mg(2+). In terms of tissue distribution, expressed in the lung.

The catalysed reaction is L-seryl-[protein] + ATP = O-phospho-L-seryl-[protein] + ADP + H(+). It carries out the reaction L-threonyl-[protein] + ATP = O-phospho-L-threonyl-[protein] + ADP + H(+). Functionally, plays a role in the cellular response to UV irradiation. Mediates G2/M cell cycle arrest, MEK autoactivation and ERK1/2-signaling pathway activation in response to UV irradiation. In ciliated cells of airways, it is involved in the regulation of mucociliary transport. The chain is Serine/threonine-protein kinase Nek10 from Homo sapiens (Human).